A 196-amino-acid polypeptide reads, in one-letter code: Pyridoxal 5'-phosphate synthase subunit PdxT (196 aa).

L-glutamine is bound at residue 47 to 49; it reads GES. The active-site Nucleophile is Cys-79. L-glutamine-binding positions include Arg-106 and 134-135; that span reads IR. Active-site charge relay system residues include His-170 and Glu-172.

Belongs to the glutaminase PdxT/SNO family. In terms of assembly, in the presence of PdxS, forms a dodecamer of heterodimers. Only shows activity in the heterodimer.

The enzyme catalyses aldehydo-D-ribose 5-phosphate + D-glyceraldehyde 3-phosphate + L-glutamine = pyridoxal 5'-phosphate + L-glutamate + phosphate + 3 H2O + H(+). The catalysed reaction is L-glutamine + H2O = L-glutamate + NH4(+). It participates in cofactor biosynthesis; pyridoxal 5'-phosphate biosynthesis. Functionally, catalyzes the hydrolysis of glutamine to glutamate and ammonia as part of the biosynthesis of pyridoxal 5'-phosphate. The resulting ammonia molecule is channeled to the active site of PdxS. The sequence is that of Pyridoxal 5'-phosphate synthase subunit PdxT from Bacillus anthracis (strain A0248).